The sequence spans 599 residues: MQQEAAQRESEELQRVQWQPRRVRGWGVPKLLWFLVFLQPVITELHLRRRNVRFLFIRFSAWQYAGTDKLWAGLVTTLCEGIRHHYGALPFSVYSVLGNKPCGPRDGLCQREWHCRRRVCLALLALLAALCLGVGLLYLSLGGHAPGHGERGVLKALGGAATTLSGSGLLMAVYSVGKHLFVSQRKKIERLVSREKFGSQLGFMCEVKKEVELLTDFLCFLEIYQRRRLRVVLEVTGLDTCYPERVVGVLNAINTLLSDSHAPFIFILVVDPSILAACLESAGNMKGTADNGYLFLNRTVTLPFSVPIMGRRTKLQFLHDAVRSRDDLLFRELTIKLQPQSPGNLGAGEGTQLLAVETQGDAERTQGRVDAEAARRIQEALCCLHDEGDCLYEYVPDNVVSMRRIVNTVPITVRLLQQQQQQQPDRVGPTPRHAVAWVVLANQWPCRLSWVLQCLEDRQQAGGAPEGRSRLWDVFCDNSRELHTMTKALQNVLDLDGDPELFERFLGTDFPFTVAEAQSLLRCTVNLDHSIRRRMGLIRAVSALKPPSPPKSPSQDGPQASPRAIIAAGTSHAGQGSGHSKEAHQTRDRTHGGKPRPMA.

Residues 1 to 416 (MQQEAAQRES…NTVPITVRLL (416 aa)) enclose the KAP NTPase domain. Transmembrane regions (helical) follow at residues 25–45 (GWGV…ITEL), 119–139 (VCLA…LLYL), and 156–176 (ALGG…VYSV). A disordered region spans residues 543 to 599 (ALKPPSPPKSPSQDGPQASPRAIIAAGTSHAGQGSGHSKEAHQTRDRTHGGKPRPMA). The segment covering 579-591 (HSKEAHQTRDRTH) has biased composition (basic and acidic residues).

The protein localises to the membrane. In Mus musculus (Mouse), this protein is NTPase KAP family P-loop domain-containing protein 1 (Nkpd1).